Here is a 57-residue protein sequence, read N- to C-terminus: Probable antitoxin MazE1 (57 aa).

As to quaternary structure, forms a complex with cognate toxin MazF1.

Functionally, antitoxin component of a type II toxin-antitoxin (TA) system. This is Probable antitoxin MazE1 (mazE1) from Mycobacterium tuberculosis (strain ATCC 25618 / H37Rv).